We begin with the raw amino-acid sequence, 321 residues long: 4-hydroxy-3-methylbut-2-enyl diphosphate reductase (321 aa).

Residue C12 coordinates [4Fe-4S] cluster. Residues H41 and H74 each contribute to the (2E)-4-hydroxy-3-methylbut-2-enyl diphosphate site. H41 and H74 together coordinate dimethylallyl diphosphate. Isopentenyl diphosphate contacts are provided by H41 and H74. Residue C96 coordinates [4Fe-4S] cluster. H124 lines the (2E)-4-hydroxy-3-methylbut-2-enyl diphosphate pocket. H124 contributes to the dimethylallyl diphosphate binding site. H124 contacts isopentenyl diphosphate. E126 serves as the catalytic Proton donor. T167 serves as a coordination point for (2E)-4-hydroxy-3-methylbut-2-enyl diphosphate. C197 is a binding site for [4Fe-4S] cluster. (2E)-4-hydroxy-3-methylbut-2-enyl diphosphate-binding residues include S225, S226, N227, and S269. S225, S226, N227, and S269 together coordinate dimethylallyl diphosphate. Positions 225, 226, 227, and 269 each coordinate isopentenyl diphosphate.

Belongs to the IspH family. In terms of assembly, homodimer. The cofactor is [4Fe-4S] cluster.

It catalyses the reaction isopentenyl diphosphate + 2 oxidized [2Fe-2S]-[ferredoxin] + H2O = (2E)-4-hydroxy-3-methylbut-2-enyl diphosphate + 2 reduced [2Fe-2S]-[ferredoxin] + 2 H(+). It carries out the reaction dimethylallyl diphosphate + 2 oxidized [2Fe-2S]-[ferredoxin] + H2O = (2E)-4-hydroxy-3-methylbut-2-enyl diphosphate + 2 reduced [2Fe-2S]-[ferredoxin] + 2 H(+). Its pathway is isoprenoid biosynthesis; dimethylallyl diphosphate biosynthesis; dimethylallyl diphosphate from (2E)-4-hydroxy-3-methylbutenyl diphosphate: step 1/1. It functions in the pathway isoprenoid biosynthesis; isopentenyl diphosphate biosynthesis via DXP pathway; isopentenyl diphosphate from 1-deoxy-D-xylulose 5-phosphate: step 6/6. Its function is as follows. Catalyzes the conversion of 1-hydroxy-2-methyl-2-(E)-butenyl 4-diphosphate (HMBPP) into a mixture of isopentenyl diphosphate (IPP) and dimethylallyl diphosphate (DMAPP). Acts in the terminal step of the DOXP/MEP pathway for isoprenoid precursor biosynthesis. This chain is 4-hydroxy-3-methylbut-2-enyl diphosphate reductase, found in Escherichia coli O6:K15:H31 (strain 536 / UPEC).